Reading from the N-terminus, the 148-residue chain is UPF0260 protein PC1_1943 (148 aa).

The protein belongs to the UPF0260 family.

In Pectobacterium carotovorum subsp. carotovorum (strain PC1), this protein is UPF0260 protein PC1_1943.